An 867-amino-acid chain; its full sequence is DNA mismatch repair protein MutS (867 aa).

Position 609–616 (609–616) interacts with ATP; sequence GPNMSGKS.

This sequence belongs to the DNA mismatch repair MutS family.

In terms of biological role, this protein is involved in the repair of mismatches in DNA. It is possible that it carries out the mismatch recognition step. This protein has a weak ATPase activity. In Latilactobacillus sakei subsp. sakei (strain 23K) (Lactobacillus sakei subsp. sakei), this protein is DNA mismatch repair protein MutS.